A 120-amino-acid polypeptide reads, in one-letter code: Large ribosomal subunit protein uL14 (120 aa).

The protein belongs to the universal ribosomal protein uL14 family. Part of the 50S ribosomal subunit. Forms a cluster with proteins L3 and L19. In the 70S ribosome, L14 and L19 interact and together make contacts with the 16S rRNA in bridges B5 and B8.

Its function is as follows. Binds to 23S rRNA. Forms part of two intersubunit bridges in the 70S ribosome. The polypeptide is Large ribosomal subunit protein uL14 (Dictyoglomus turgidum (strain DSM 6724 / Z-1310)).